We begin with the raw amino-acid sequence, 346 residues long: Probable dual-specificity RNA methyltransferase RlmN (346 aa).

The active-site Proton acceptor is the Glu-92. Positions 98–332 (TDQRLTVCVS…VSLRASRGLD (235 aa)) constitute a Radical SAM core domain. The cysteines at positions 105 and 337 are disulfide-linked. [4Fe-4S] cluster contacts are provided by Cys-112, Cys-116, and Cys-119. S-adenosyl-L-methionine-binding positions include 159-160 (GE), Ser-189, 218-220 (SLH), and Asn-294. The active-site S-methylcysteine intermediate is the Cys-337.

It belongs to the radical SAM superfamily. RlmN family. The cofactor is [4Fe-4S] cluster.

The protein resides in the cytoplasm. It catalyses the reaction adenosine(2503) in 23S rRNA + 2 reduced [2Fe-2S]-[ferredoxin] + 2 S-adenosyl-L-methionine = 2-methyladenosine(2503) in 23S rRNA + 5'-deoxyadenosine + L-methionine + 2 oxidized [2Fe-2S]-[ferredoxin] + S-adenosyl-L-homocysteine. It carries out the reaction adenosine(37) in tRNA + 2 reduced [2Fe-2S]-[ferredoxin] + 2 S-adenosyl-L-methionine = 2-methyladenosine(37) in tRNA + 5'-deoxyadenosine + L-methionine + 2 oxidized [2Fe-2S]-[ferredoxin] + S-adenosyl-L-homocysteine. In terms of biological role, specifically methylates position 2 of adenine 2503 in 23S rRNA and position 2 of adenine 37 in tRNAs. This chain is Probable dual-specificity RNA methyltransferase RlmN, found in Synechococcus sp. (strain CC9311).